Here is a 265-residue protein sequence, read N- to C-terminus: Polyglutamine-binding protein 1 (265 aa).

Positions 46–80 constitute a WW domain; sequence EGLPPSWYKVFDPSCGLPYYWNADTDLVSWLSPHD. Ser94 carries the phosphoserine modification. Positions 94–265 are disordered; that stretch reads SSNADAEEKL…AEASRTKQQD (172 aa). Basic and acidic residues predominate over residues 99–175; it reads AEEKLDRSHD…DKADREEGKE (77 aa). Tandem repeats lie at residues 104–110, 111–117, 118–124, 125–131, 132–138, 139–140, 141–142, 143–144, 150–151, 152–153, 154–155, 156–157, 158–159, 160–161, and 162–163. The tract at residues 104-138 is 5 X 7 AA approximate tandem repeats of D-R-[SG]-H-D-K-S; sequence DRSHDKSDRGHDKSDRSHEKLDRGHDKSDRGHDKS. The interval 139–144 is 3 X 2 AA tandem repeats of [DE]-R; that stretch reads DRDRER. The segment at 150–163 is 7 X 2 AA tandem repeats of [DE]-R; the sequence is DRERERDRERDRDR. The interval 245–255 is important for interaction with TXNL4A; the sequence is YPSPGAVLRAN. Ser247 carries the phosphoserine modification.

Interacts with POU3F2/Brn-2, ATXN1, TXNL4A, HTT and AR. Interaction with ATXN1 correlates positively with the length of the polyglutamine tract. Interacts with RNA polymerase II large subunit in a phosphorylation-dependent manner. Forms a ternary complex with ATXN1 mutant and phosphorylated RNA polymerase II. Interacts (via C-terminus) with TXNL4A and CD2BP2. Interacts (via WW domain) with ATN1 and SF3B1, and may interact with additional splice factors. Interacts (via WW domain) with WBP11; Leading to reduce interaction between PQBP1 and TXNL4A. Interacts with CAPRIN1. Interacts with DDX1. Interacts with SFPQ. Interacts with KHSRP.

The protein resides in the nucleus. The protein localises to the nucleus speckle. It is found in the cytoplasmic granule. Intrinsically disordered protein that acts as a scaffold, and which is involved in different processes, such as pre-mRNA splicing, transcription regulation, innate immunity and neuron development. Interacts with splicing-related factors via the intrinsically disordered region and regulates alternative splicing of target pre-mRNA species. May suppress the ability of POU3F2 to transactivate the DRD1 gene in a POU3F2 dependent manner. Can activate transcription directly or via association with the transcription machinery. May be involved in ATXN1 mutant-induced cell death. The interaction with ATXN1 mutant reduces levels of phosphorylated RNA polymerase II large subunit. Involved in the assembly of cytoplasmic stress granule, possibly by participating in the transport of neuronal RNA granules. Also acts as an innate immune sensor of infection by retroviruses, by detecting the presence of reverse-transcribed DNA in the cytosol. Directly binds retroviral reverse-transcribed DNA in the cytosol and interacts with CGAS, leading to activate the cGAS-STING signaling pathway, triggering type-I interferon production. The protein is Polyglutamine-binding protein 1 (PQBP1) of Gorilla gorilla gorilla (Western lowland gorilla).